We begin with the raw amino-acid sequence, 380 residues long: Tryptophan--tRNA ligase (380 aa).

The 'HIGH' region motif lies at 81–89 (PSLGMHIGH). The 'KMSKS' region signature appears at 253 to 257 (KMSSS).

The protein belongs to the class-I aminoacyl-tRNA synthetase family.

The protein localises to the cytoplasm. The catalysed reaction is tRNA(Trp) + L-tryptophan + ATP = L-tryptophyl-tRNA(Trp) + AMP + diphosphate + H(+). The protein is Tryptophan--tRNA ligase of Saccharolobus solfataricus (strain ATCC 35092 / DSM 1617 / JCM 11322 / P2) (Sulfolobus solfataricus).